The primary structure comprises 288 residues: Probable endonuclease 4 (288 aa).

His75, His115, Glu153, Asp187, His190, His224, Asp237, His239, and Glu269 together coordinate Zn(2+).

It belongs to the AP endonuclease 2 family. Zn(2+) serves as cofactor.

The enzyme catalyses Endonucleolytic cleavage to 5'-phosphooligonucleotide end-products.. Its function is as follows. Endonuclease IV plays a role in DNA repair. It cleaves phosphodiester bonds at apurinic or apyrimidinic (AP) sites, generating a 3'-hydroxyl group and a 5'-terminal sugar phosphate. The polypeptide is Probable endonuclease 4 (Chlamydia muridarum (strain MoPn / Nigg)).